Here is a 91-residue protein sequence, read N- to C-terminus: Large ribosomal subunit protein uL22 (91 aa).

Belongs to the universal ribosomal protein uL22 family. Part of the 50S ribosomal subunit.

Its function is as follows. This protein binds specifically to 23S rRNA; its binding is stimulated by other ribosomal proteins, e.g. L4, L17, and L20. It is important during the early stages of 50S assembly. It makes multiple contacts with different domains of the 23S rRNA in the assembled 50S subunit and ribosome. In terms of biological role, the globular domain of the protein is located near the polypeptide exit tunnel on the outside of the subunit, while an extended beta-hairpin is found that lines the wall of the exit tunnel in the center of the 70S ribosome. This Pigeon pea witches'-broom phytoplasma protein is Large ribosomal subunit protein uL22 (rplV).